Consider the following 219-residue polypeptide: MDAEFWLERWRDGRTHFHQQRVTPLLAKYWPTLQLPPGCRVLVPLCGKTLDMVWLAQQGHQVLGVELSSLAVEQFFAENGLQATVREAGPGTYYSAGDISIYCGDIFDLGADVLGDCVGAFDRAALVALPAAMRPRYARHVYGQLSAAYRGLLITLDYDQSQMDGPPFSVRDDEVQAIYAGHSEAVLIDRRDILSKEPKFAERGLTQLDTLVYRLQRQG.

Residues Trp-10, Leu-45, Glu-66, and Arg-123 each coordinate S-adenosyl-L-methionine.

This sequence belongs to the class I-like SAM-binding methyltransferase superfamily. TPMT family.

It localises to the cytoplasm. The enzyme catalyses S-adenosyl-L-methionine + a thiopurine = S-adenosyl-L-homocysteine + a thiopurine S-methylether.. This is Thiopurine S-methyltransferase from Bordetella petrii (strain ATCC BAA-461 / DSM 12804 / CCUG 43448).